The primary structure comprises 336 residues: GTPase Obg (336 aa).

The Obg domain occupies methionine 1 to isoleucine 159. Residues alanine 160 to alanine 327 form the OBG-type G domain. Residues glycine 166–serine 173, phenylalanine 191–histidine 195, aspartate 212–glycine 215, serine 279–aspartate 282, and serine 308–valine 310 each bind GTP. The Mg(2+) site is built by serine 173 and threonine 193.

It belongs to the TRAFAC class OBG-HflX-like GTPase superfamily. OBG GTPase family. As to quaternary structure, monomer. Requires Mg(2+) as cofactor.

Its subcellular location is the cytoplasm. In terms of biological role, an essential GTPase which binds GTP, GDP and possibly (p)ppGpp with moderate affinity, with high nucleotide exchange rates and a fairly low GTP hydrolysis rate. Plays a role in control of the cell cycle, stress response, ribosome biogenesis and in those bacteria that undergo differentiation, in morphogenesis control. The protein is GTPase Obg of Rhizobium meliloti (strain 1021) (Ensifer meliloti).